Reading from the N-terminus, the 297-residue chain is Protein COFACTOR ASSEMBLY OF COMPLEX C SUBUNIT B CCB4, chloroplastic (297 aa).

A chloroplast-targeting transit peptide spans 1 to 33; that stretch reads MEARIILLRIQIPWSANRQFSHPPLDFPRFIRA. Over 34-70 the chain is Stromal; that stretch reads SSSSTSQKPKTYEGPKPRKNLVADFISKNDDLVRSLP. The chain crosses the membrane as a helical span at residues 71–91; sequence IYVGGASLLAVLFNRTVSGIA. Over 92–103 the chain is Lumenal; that stretch reads PVADASSSQSRA. Residues 104-124 traverse the membrane as a helical segment; that stretch reads DLLALGLAVTNLLTGLVWLSI. At 125–297 the chain is on the stromal side; sequence RPKSITPVNP…DSDEISRVTV (173 aa).

The protein localises to the plastid. It is found in the chloroplast thylakoid membrane. Required for the biogenesis and accumulation of native cytochrome b6 in the thylakoid membrane. Controls the conversion of apocytochrome b6 to holocytochrome b6. Required for covalent binding of the c-type heme to cytochrome b6. The protein is Protein COFACTOR ASSEMBLY OF COMPLEX C SUBUNIT B CCB4, chloroplastic of Arabidopsis thaliana (Mouse-ear cress).